The chain runs to 196 residues: Large ribosomal subunit protein bL17 (196 aa).

Positions Ala133–Lys196 are disordered. The segment covering Ala134–Ala143 has biased composition (basic and acidic residues). The segment covering Glu152–Ala164 has biased composition (acidic residues). Positions Ala184–Lys196 are enriched in basic and acidic residues.

The protein belongs to the bacterial ribosomal protein bL17 family. Part of the 50S ribosomal subunit. Contacts protein L32.

The chain is Large ribosomal subunit protein bL17 from Arthrobacter sp. (strain FB24).